Reading from the N-terminus, the 265-residue chain is 3-methyl-2-oxobutanoate hydroxymethyltransferase (265 aa).

Mg(2+) contacts are provided by D43 and D82. 3-methyl-2-oxobutanoate contacts are provided by residues 43–44 (DS), D82, and K111. E113 provides a ligand contact to Mg(2+). Catalysis depends on E180, which acts as the Proton acceptor.

The protein belongs to the PanB family. Homodecamer; pentamer of dimers. Mg(2+) serves as cofactor.

The protein resides in the cytoplasm. The catalysed reaction is 3-methyl-2-oxobutanoate + (6R)-5,10-methylene-5,6,7,8-tetrahydrofolate + H2O = 2-dehydropantoate + (6S)-5,6,7,8-tetrahydrofolate. Its pathway is cofactor biosynthesis; (R)-pantothenate biosynthesis; (R)-pantoate from 3-methyl-2-oxobutanoate: step 1/2. Functionally, catalyzes the reversible reaction in which hydroxymethyl group from 5,10-methylenetetrahydrofolate is transferred onto alpha-ketoisovalerate to form ketopantoate. The sequence is that of 3-methyl-2-oxobutanoate hydroxymethyltransferase from Francisella tularensis subsp. novicida (strain U112).